Reading from the N-terminus, the 197-residue chain is GCN5-related N-acetyltransferase 1, chloroplastic (197 aa).

The N-terminal 37 residues, 1–37 (MFLGGTISTPPASLRLRSTLNPQNAVTQSSSQATFPA), are a transit peptide targeting the chloroplast. Polar residues predominate over residues 23–34 (QNAVTQSSSQAT). A disordered region spans residues 23–46 (QNAVTQSSSQATFPAAMQRKPPSY). Residues 58 to 195 (FLLRRTTEGL…GMVFIRKQRN (138 aa)) enclose the N-acetyltransferase domain. Residues 129–131 (VVV), 137–142 (SCGLGK), 165–167 (EPR), and Tyr172 contribute to the acetyl-CoA site. Tyr172 serves as the catalytic Proton donor.

This sequence belongs to the acetyltransferase family. GNAT subfamily. Oligomer. Post-translationally, autoacetylated. As to expression, expressed in green tissues. Accumulates mainly in flowers and young leaves, and, to a lower extent, in stems and mature leaves, but barely in roots.

Its subcellular location is the plastid. The protein localises to the chloroplast. It carries out the reaction an N-terminal L-alpha-aminoacyl-[protein] + acetyl-CoA = N-terminal N(alpha)-acetyl-L-alpha-aminoacyl-[protein] + CoA + H(+). The enzyme catalyses L-lysyl-[protein] + acetyl-CoA = N(6)-acetyl-L-lysyl-[protein] + CoA + H(+). It catalyses the reaction 5-methoxytryptamine + acetyl-CoA = melatonin + CoA + H(+). The catalysed reaction is serotonin + acetyl-CoA = N-acetylserotonin + CoA + H(+). Inhibited by 5-methoxytryptamine in vitro. Its function is as follows. Protein acetyltransferase with dual specificity triggering both N-alpha-acetylation (NTA) and epsilon-lysine acetylation (KA), possibly with a low efficiency or toward specific plastid substrates. Involved in melatonin biosynthesis by catalyzing the formation of N-acetylserotonin (NAS) from serotonin and of melatonin (N-acetyl-5-methoxytryptamine) from 5-methoxytryptamine (5-MT). The protein is GCN5-related N-acetyltransferase 1, chloroplastic of Arabidopsis thaliana (Mouse-ear cress).